Reading from the N-terminus, the 165-residue chain is Transcription antitermination protein NusB (165 aa).

Belongs to the NusB family.

In terms of biological role, involved in transcription antitermination. Required for transcription of ribosomal RNA (rRNA) genes. Binds specifically to the boxA antiterminator sequence of the ribosomal RNA (rrn) operons. This chain is Transcription antitermination protein NusB, found in Nitratidesulfovibrio vulgaris (strain DSM 19637 / Miyazaki F) (Desulfovibrio vulgaris).